The chain runs to 314 residues: (-)-isopiperitenone reductase (314 aa).

10 to 33 serves as a coordination point for NADP(+); sequence VTGANKGIGFEICRQLAEKGIIVI. Serine 182 contacts substrate.

Belongs to the short-chain dehydrogenases/reductases (SDR) family.

The protein localises to the cytoplasm. It catalyses the reaction (2R,5R)-isopulegone + NADP(+) = (6R)-isopiperitenone + NADPH + H(+). It functions in the pathway secondary metabolite biosynthesis; terpenoid biosynthesis. Its function is as follows. Monoterpene synthase that catalyzes the specific reduction of the 1(2)-double bond of (-)-isopiperitenone to produce (+)-cis-isopulegone. Does not catalyze the reverse reaction. Unable to reduce (+)-pulegone, (+)-cis-isopulegone, (-)-menthone or the 1,2-double bond of (-)-carvone. Able to utilize NADH with 20% the efficiency of NADPH. In Mentha piperita (Peppermint), this protein is (-)-isopiperitenone reductase.